Here is a 249-residue protein sequence, read N- to C-terminus: DNA polymerase sliding clamp (249 aa).

This sequence belongs to the PCNA family. As to quaternary structure, homotrimer. The subunits circularize to form a toroid; DNA passes through its center. Replication factor C (RFC) is required to load the toroid on the DNA.

Functionally, sliding clamp subunit that acts as a moving platform for DNA processing. Responsible for tethering the catalytic subunit of DNA polymerase and other proteins to DNA during high-speed replication. The polypeptide is DNA polymerase sliding clamp (Pyrococcus horikoshii (strain ATCC 700860 / DSM 12428 / JCM 9974 / NBRC 100139 / OT-3)).